A 97-amino-acid polypeptide reads, in one-letter code: NELL2-interacting cell ontogeny regulator 1 (97 aa).

An N-terminal signal peptide occupies residues 1–35 (MAPLPPCGPPRSPPPRLLLLLLLLSATLLGAPARA).

It belongs to the NICOL family. As to quaternary structure, interacts with NELL2; triggers epididymal differentiation. Interacts with cell surface receptor TFRC; the interaction mediates uptake of NICOL1 into fibroblasts.

The protein localises to the secreted. It is found in the cytoplasm. Its subcellular location is the perinuclear region. Its function is as follows. mRNA-binding protein which interacts with a range of target mRNAs including SERPINE1, ACTA2, CCN2 and COL4A1 and may promote extracellular matrix production. Binds to the 3'-UTR of SERPINE1 mRNA and stabilizes the mRNA, possibly by competing for binding with SERBP1 and preventing SERBP1-mediated mRNA degradation. Also binds to the 3'-UTR of ACTA2. Testis-derived lumicrine factor that triggers epididymal differentiation and sperm maturation. This chain is NELL2-interacting cell ontogeny regulator 1, found in Bos taurus (Bovine).